A 209-amino-acid chain; its full sequence is Putative 3-methyladenine DNA glycosylase (209 aa).

It belongs to the DNA glycosylase MPG family.

In Deinococcus geothermalis (strain DSM 11300 / CIP 105573 / AG-3a), this protein is Putative 3-methyladenine DNA glycosylase.